Here is an 89-residue protein sequence, read N- to C-terminus: Small ribosomal subunit protein uS14 (89 aa).

The protein belongs to the universal ribosomal protein uS14 family. Part of the 30S ribosomal subunit. Contacts proteins S3 and S10.

Binds 16S rRNA, required for the assembly of 30S particles and may also be responsible for determining the conformation of the 16S rRNA at the A site. The chain is Small ribosomal subunit protein uS14 from Acholeplasma laidlawii (strain PG-8A).